We begin with the raw amino-acid sequence, 446 residues long: Tubulin alpha chain-like 3 (446 aa).

The short motif at 1–4 is the MREC motif element; it reads MREC. Residues Q11, E78, S147, G151, T152, T186, N213, and N235 each coordinate GTP. Mg(2+) is bound at residue E78. The active site involves E261.

It belongs to the tubulin family. In terms of assembly, dimer of alpha and beta chains. A typical microtubule is a hollow water-filled tube with an outer diameter of 25 nm and an inner diameter of 15 nM. Alpha-beta heterodimers associate head-to-tail to form protofilaments running lengthwise along the microtubule wall with the beta-tubulin subunit facing the microtubule plus end conferring a structural polarity. Microtubules usually have 13 protofilaments but different protofilament numbers can be found in some organisms and specialized cells. Mg(2+) serves as cofactor. In terms of processing, some glutamate residues at the C-terminus are polyglycylated, resulting in polyglycine chains on the gamma-carboxyl group. Glycylation is mainly limited to tubulin incorporated into axonemes (cilia and flagella) whereas glutamylation is prevalent in neuronal cells, centrioles, axonemes, and the mitotic spindle. Both modifications can coexist on the same protein on adjacent residues, and lowering polyglycylation levels increases polyglutamylation, and reciprocally. Cilia and flagella glycylation is required for their stability and maintenance. Flagella glycylation controls sperm motility. Some glutamate residues at the C-terminus are polyglutamylated, resulting in polyglutamate chains on the gamma-carboxyl group. Polyglutamylation plays a key role in microtubule severing by spastin (SPAST). SPAST preferentially recognizes and acts on microtubules decorated with short polyglutamate tails: severing activity by SPAST increases as the number of glutamates per tubulin rises from one to eight, but decreases beyond this glutamylation threshold. Glutamylation is also involved in cilia motility.

Its subcellular location is the cytoplasm. It is found in the cytoskeleton. It carries out the reaction GTP + H2O = GDP + phosphate + H(+). Its function is as follows. Tubulin is the major constituent of microtubules, a cylinder consisting of laterally associated linear protofilaments composed of alpha- and beta-tubulin heterodimers. Microtubules grow by the addition of GTP-tubulin dimers to the microtubule end, where a stabilizing cap forms. Below the cap, tubulin dimers are in GDP-bound state, owing to GTPase activity of alpha-tubulin. The polypeptide is Tubulin alpha chain-like 3 (Tubal3) (Mus musculus (Mouse)).